A 380-amino-acid chain; its full sequence is MAGVVESVPFEGSPRPTIGIEWEVALVDKVTRDLSNTAAAVFDAVGDLRAWDGTPQVTKELLRNTVEIVTGVHETVGAAVEDLRGTMDKVRRAADPLGVDVFCAGTHPFAQWSTQQLTRSPHYDELIERTQWWGRQMMIWGVHVHVGVSHREKVFPILNSLLTTFPHLLALSASSPMWAGSDTGYASNRTLMFQQLPTAGLPFQFENWRQFEHFVHDELKTGVFEQLGGLHWDIRPAPKWGTIEVRICDGIPTHAELAAIAAFIHCLIVDLDQRIEDGEQPITLPPWHVQENKWRAARYGLDAIVITDADSNERLVTDDLMDLLNRLEPTAKRLGCADELAYVATIPERGASYQRQRKVAAASQGDLVAVVDALVHELDR.

Belongs to the glutamate--cysteine ligase type 2 family. YbdK subfamily.

It carries out the reaction L-cysteine + L-glutamate + ATP = gamma-L-glutamyl-L-cysteine + ADP + phosphate + H(+). Its function is as follows. ATP-dependent carboxylate-amine ligase which exhibits weak glutamate--cysteine ligase activity. This Nocardia farcinica (strain IFM 10152) protein is Putative glutamate--cysteine ligase 2-2.